Reading from the N-terminus, the 357-residue chain is Aminomethyltransferase (357 aa).

It belongs to the GcvT family. In terms of assembly, the glycine cleavage system is composed of four proteins: P, T, L and H.

The enzyme catalyses N(6)-[(R)-S(8)-aminomethyldihydrolipoyl]-L-lysyl-[protein] + (6S)-5,6,7,8-tetrahydrofolate = N(6)-[(R)-dihydrolipoyl]-L-lysyl-[protein] + (6R)-5,10-methylene-5,6,7,8-tetrahydrofolate + NH4(+). The glycine cleavage system catalyzes the degradation of glycine. This Halothermothrix orenii (strain H 168 / OCM 544 / DSM 9562) protein is Aminomethyltransferase.